A 496-amino-acid polypeptide reads, in one-letter code: Glycylpeptide N-tetradecanoyltransferase 1 (496 aa).

Positions Met1–Thr82 are disordered. 2 positions are modified to phosphoserine: Ser31 and Ser47. Positions Lys55–Glu66 are enriched in basic residues. The residue at position 83 (Ser83) is a Phosphoserine. 11 residues coordinate tetradecanoyl-CoA: Gln118, Phe119, Trp120, Phe247, Leu248, Cys249, Val250, Ser256, Arg258, Val259, and Ala260.

Belongs to the NMT family. Ubiquitous.

Its subcellular location is the cytoplasm. The protein resides in the cytosol. It localises to the membrane. It catalyses the reaction N-terminal glycyl-[protein] + tetradecanoyl-CoA = N-tetradecanoylglycyl-[protein] + CoA + H(+). The enzyme catalyses N-terminal glycyl-L-lysyl-[protein] + tetradecanoyl-CoA = N-terminal glycyl-(N(6)-tetradecanoyl)-L-lysyl-[protein] + CoA + H(+). Functionally, adds a myristoyl group to the N-terminal glycine residue of certain cellular and viral proteins. Also able to mediate N-terminal lysine myristoylation of proteins: catalyzes myristoylation of ARF6 on both 'Gly-2' and 'Lys-3'. Lysine myristoylation is required to maintain ARF6 on membranes during the GTPase cycle. Required for normal embryogenesis. The chain is Glycylpeptide N-tetradecanoyltransferase 1 from Mus musculus (Mouse).